Reading from the N-terminus, the 217-residue chain is NADPH-dependent 3-demethoxyubiquinone 3-hydroxylase, mitochondrial (217 aa).

A run of 2 repeats spans residues Ala48–Leu129 and Gly130–Phe217. The 2 X approximate tandem repeats stretch occupies residues Ala48–Phe217. Positions 60, 90, 93, 142, 178, and 181 each coordinate Fe cation. NADH-binding residues include Tyr212 and Arg216.

This sequence belongs to the COQ7 family. Component of a multi-subunit COQ enzyme complex. Interacts with COQ8B and COQ6. Interacts with COQ9. It depends on Fe cation as a cofactor.

Its subcellular location is the mitochondrion inner membrane. It catalyses the reaction a 5-methoxy-2-methyl-3-(all-trans-polyprenyl)benzoquinone + NADH + O2 = a 3-demethylubiquinone + NAD(+) + H2O. The protein operates within cofactor biosynthesis; ubiquinone biosynthesis. Its function is as follows. Catalyzes the hydroxylation of the 5-methoxy-2-methyl-3-(all-trans-polyprenyl)benzoquinone at the C6 position and participates in the biosynthesis of ubiquinone. Catalyzes the reaction through a substrate-mediated reduction pathway, whereby NADH shuttles electrons to 5-methoxy-2-methyl-3-(all-trans-decaprenyl)benzoquinone, which then transfers the electrons to the two Fe(3+) centers. The binding of 5-methoxy-2-methyl-3-(all-trans-polyprenyl)benzoquinone (DMQn) mediates reduction of the diiron center by nicotinamide adenine dinucleotide (NADH) and initiates oxygen activation for subsequent DMQ hydroxylation. The physiological substrates are 5-methoxy-2-methyl-3-(all-trans-nonaprenyl)benzoquinone (DMQ(9)) and 5-methoxy-2-methyl-3-(all-trans-decaprenyl)benzoquinone (DMQ(10)), however in vitro the enzyme does not have any specificity concerning the length of the polyprenyl tail, and accepts tails of various lengths with similar efficiency. Also has a structural role in the COQ enzyme complex, stabilizing other COQ polypeptides. Involved in lifespan determination in a ubiquinone-independent manner. Plays a role in modulating mitochondrial stress responses, acting in the nucleus, perhaps via regulating gene expression, independent of its characterized mitochondrial function in ubiquinone biosynthesis. The protein is NADPH-dependent 3-demethoxyubiquinone 3-hydroxylase, mitochondrial of Rattus norvegicus (Rat).